Consider the following 457-residue polypeptide: tRNA (guanine(37)-N(1))-methyltransferase (457 aa).

Residues His-225, 263 to 264 (DL), 291 to 292 (DG), and Asn-358 each bind S-adenosyl-L-methionine.

It belongs to the class I-like SAM-binding methyltransferase superfamily. TRM5/TYW2 family. Monomer.

The protein localises to the mitochondrion matrix. The protein resides in the nucleus. It localises to the cytoplasm. The catalysed reaction is guanosine(37) in tRNA + S-adenosyl-L-methionine = N(1)-methylguanosine(37) in tRNA + S-adenosyl-L-homocysteine + H(+). Functionally, specifically methylates the N1 position of guanosine-37 in various cytoplasmic and mitochondrial tRNAs. Methylation is not dependent on the nature of the nucleoside 5' of the target nucleoside. This is the first step in the biosynthesis of wybutosine (yW), a modified base adjacent to the anticodon of tRNAs and required for accurate decoding. This chain is tRNA (guanine(37)-N(1))-methyltransferase, found in Coprinopsis cinerea (strain Okayama-7 / 130 / ATCC MYA-4618 / FGSC 9003) (Inky cap fungus).